A 1423-amino-acid polypeptide reads, in one-letter code: DNA-directed RNA polymerase subunit beta' (1423 aa).

Zn(2+) contacts are provided by Cys-70, Cys-72, Cys-85, and Cys-88. Mg(2+)-binding residues include Asp-461, Asp-463, and Asp-465. Cys-809, Cys-883, Cys-890, and Cys-893 together coordinate Zn(2+). The interval 1383-1423 (EEHAAELRQPVQADTGDDPLGAVVGESHGTDADAGDYLTEE) is disordered.

Belongs to the RNA polymerase beta' chain family. As to quaternary structure, the RNAP catalytic core consists of 2 alpha, 1 beta, 1 beta' and 1 omega subunit. When a sigma factor is associated with the core the holoenzyme is formed, which can initiate transcription. Requires Mg(2+) as cofactor. The cofactor is Zn(2+).

The enzyme catalyses RNA(n) + a ribonucleoside 5'-triphosphate = RNA(n+1) + diphosphate. DNA-dependent RNA polymerase catalyzes the transcription of DNA into RNA using the four ribonucleoside triphosphates as substrates. In Rhizorhabdus wittichii (strain DSM 6014 / CCUG 31198 / JCM 15750 / NBRC 105917 / EY 4224 / RW1) (Sphingomonas wittichii), this protein is DNA-directed RNA polymerase subunit beta'.